The following is a 98-amino-acid chain: Large ribosomal subunit protein bL25 (98 aa).

The interval 1–23 (MANFVLNAQARAEDKQGKGASRR) is disordered.

The protein belongs to the bacterial ribosomal protein bL25 family. In terms of assembly, part of the 50S ribosomal subunit; part of the 5S rRNA/L5/L18/L25 subcomplex. Contacts the 5S rRNA. Binds to the 5S rRNA independently of L5 and L18.

Functionally, this is one of the proteins that binds to the 5S RNA in the ribosome where it forms part of the central protuberance. This Acinetobacter baumannii (strain AB307-0294) protein is Large ribosomal subunit protein bL25.